The sequence spans 73 residues: Probable minor pilin MMP0528 (73 aa).

Residues 1 to 10 (MLKKLYSKKG) constitute a propeptide that is removed on maturation. The short motif at 11-19 (QVSMEMGIL) is the QXSXEXXXL element.

Post-translationally, the N-terminus is probably cleaved by the prepilin peptidase EppA, which recognizes the class III signal sequence.

It is found in the secreted. Its subcellular location is the cell surface. The protein localises to the fimbrium. The chain is Probable minor pilin MMP0528 from Methanococcus maripaludis (strain DSM 14266 / JCM 13030 / NBRC 101832 / S2 / LL).